The following is a 585-amino-acid chain: A-type ATP synthase subunit A (585 aa).

Glycine 237–threonine 244 serves as a coordination point for ATP.

Belongs to the ATPase alpha/beta chains family. As to quaternary structure, has multiple subunits with at least A(3), B(3), C, D, E, F, H, I and proteolipid K(x).

It localises to the cell membrane. The catalysed reaction is ATP + H2O + 4 H(+)(in) = ADP + phosphate + 5 H(+)(out). Functionally, component of the A-type ATP synthase that produces ATP from ADP in the presence of a proton gradient across the membrane. The A chain is the catalytic subunit. This Natronomonas pharaonis (strain ATCC 35678 / DSM 2160 / CIP 103997 / JCM 8858 / NBRC 14720 / NCIMB 2260 / Gabara) (Halobacterium pharaonis) protein is A-type ATP synthase subunit A.